Here is a 436-residue protein sequence, read N- to C-terminus: Acrosin (436 aa).

An N-terminal signal peptide occupies residues 1-19; it reads MVEMLPTVAVLVLAVSVVA. Asn22 is a glycosylation site (N-linked (GlcNAc...) asparagine). 6 disulfide bridges follow: Cys25–Cys155, Cys29–Cys163, Cys74–Cys90, Cys178–Cys247, Cys210–Cys226, and Cys237–Cys267. Residues 43–291 enclose the Peptidase S1 domain; that stretch reads IVSGQSAQLG…YLDWIASKIG (249 aa). Catalysis depends on charge relay system residues His89 and Asp143. Residue Asn211 is glycosylated (N-linked (GlcNAc...) asparagine). Ser241 acts as the Charge relay system in catalysis. Residues 346 to 436 constitute a propeptide, pro-rich; it reads PSSTQTSSSL…NKPSEPFLHS (91 aa).

This sequence belongs to the peptidase S1 family. As to quaternary structure, heavy chain (catalytic) and a light chain linked by two disulfide bonds. Forms a heterodimer with SERPINA5.

It catalyses the reaction Preferential cleavage: Arg-|-Xaa, Lys-|-Xaa.. Its activity is regulated as follows. Inhibited by SERPINA5. In terms of biological role, acrosin is the major protease of mammalian spermatozoa. It is a serine protease of trypsin-like cleavage specificity, it is synthesized in a zymogen form, proacrosin and stored in the acrosome. This Mus musculus (Mouse) protein is Acrosin (Acr).